We begin with the raw amino-acid sequence, 200 residues long: Pyridoxal 5'-phosphate synthase subunit PdxT (200 aa).

L-glutamine is bound at residue 46–48 (GES). The Nucleophile role is filled by C78. Residues R107 and 138–139 (IR) each bind L-glutamine. Residues H175 and E177 each act as charge relay system in the active site.

This sequence belongs to the glutaminase PdxT/SNO family. In the presence of PdxS, forms a dodecamer of heterodimers. Only shows activity in the heterodimer.

The enzyme catalyses aldehydo-D-ribose 5-phosphate + D-glyceraldehyde 3-phosphate + L-glutamine = pyridoxal 5'-phosphate + L-glutamate + phosphate + 3 H2O + H(+). It catalyses the reaction L-glutamine + H2O = L-glutamate + NH4(+). It functions in the pathway cofactor biosynthesis; pyridoxal 5'-phosphate biosynthesis. Its function is as follows. Catalyzes the hydrolysis of glutamine to glutamate and ammonia as part of the biosynthesis of pyridoxal 5'-phosphate. The resulting ammonia molecule is channeled to the active site of PdxS. This is Pyridoxal 5'-phosphate synthase subunit PdxT from Corynebacterium glutamicum (strain ATCC 13032 / DSM 20300 / JCM 1318 / BCRC 11384 / CCUG 27702 / LMG 3730 / NBRC 12168 / NCIMB 10025 / NRRL B-2784 / 534).